Consider the following 392-residue polypeptide: DNA-directed RNA polymerase subunit Rpo1C (392 aa).

Belongs to the RNA polymerase beta' chain family. In terms of assembly, part of the 13-subunit RNA polymerase complex.

It is found in the cytoplasm. It carries out the reaction RNA(n) + a ribonucleoside 5'-triphosphate = RNA(n+1) + diphosphate. DNA-dependent RNA polymerase (RNAP) catalyzes the transcription of DNA into RNA using the four ribonucleoside triphosphates as substrates. Forms part of the jaw domain. The chain is DNA-directed RNA polymerase subunit Rpo1C from Saccharolobus solfataricus (strain ATCC 35092 / DSM 1617 / JCM 11322 / P2) (Sulfolobus solfataricus).